The primary structure comprises 201 residues: Acyl-homoserine-lactone synthase (201 aa).

It belongs to the autoinducer synthase family.

It catalyses the reaction a fatty acyl-[ACP] + S-adenosyl-L-methionine = an N-acyl-L-homoserine lactone + S-methyl-5'-thioadenosine + holo-[ACP] + H(+). Its function is as follows. Required for the synthesis of BHL (N-butanoyl-L-homoserine lactone), and HHL (N-hexanoyl-L-homoserine lactone) autoinducer molecules which bind to RhlR and thus acts in elastase biosynthesis regulation. This chain is Acyl-homoserine-lactone synthase (rhlI), found in Pseudomonas aeruginosa (strain ATCC 15692 / DSM 22644 / CIP 104116 / JCM 14847 / LMG 12228 / 1C / PRS 101 / PAO1).